The following is a 2517-amino-acid chain: Cullin-9 (2517 aa).

K87 is covalently cross-linked (Glycyl lysine isopeptide (Lys-Gly) (interchain with G-Cter in ubiquitin)). Over residues 276-288 (SPELGAGDQSSPC) the composition is skewed to polar residues. The disordered stretch occupies residues 276–296 (SPELGAGDQSSPCATREKSRG). The 74-residue stretch at 366 to 439 (RSEFSSRSGY…HWHMLEILGP (74 aa)) folds into the CPH domain. Over residues 576-589 (SNEPSSSSTSRNHS) the composition is skewed to low complexity. A disordered region spans residues 576–639 (SNEPSSSSTS…TETPMAQSDS (64 aa)). Over residues 593–609 (DPEEESKSEASFSEEET) the composition is skewed to acidic residues. Residues 610–630 (ESLKAKAEAPKTEAEPTKTRT) are compositionally biased toward basic and acidic residues. A Phosphoserine modification is found at S976. Residues 1143–1322 (PINIPFFDVF…RTCLFYTIRA (180 aa)) form the DOC domain. 1363–1370 (AAQALGKT) contributes to the ATP binding site. 2 disordered regions span residues 1432-1466 (VEPP…VLPS) and 1664-1685 (DEEE…AEKE). The span at 1433–1443 (EPPPGPSPEPS) shows a compositional bias: pro residues. At S1457 the chain carries Phosphoserine. Residues 1649–1691 (LFQLQRLDKLFLEQEDEEEKRLEEEEEEEEEEEAEKELFIEDP) adopt a coiled-coil conformation. A compositionally biased stretch (acidic residues) spans 1664–1683 (DEEEKRLEEEEEEEEEEEAE). Residue K1881 forms a Glycyl lysine isopeptide (Lys-Gly) (interchain with G-Cter in NEDD8) linkage. The interval 2066 to 2283 (RPDHCPVCVS…KDYYNCSAMV (218 aa)) is TRIAD supradomain. Residues C2070, C2073, C2088, H2090, C2093, C2096, C2115, C2120, C2160, C2166, C2181, C2184, C2189, C2192, H2198, C2203, C2236, and C2239 each contribute to the Zn(2+) site. An RING-type 1 zinc finger spans residues 2070–2120 (CPVCVSPLGCDDDLPSLCCMHYCCKSCWNEYLTTRIEQNLVLNCTCPIADC). Residues 2140–2203 (SKYEKALLRG…FPEAHYPASC (64 aa)) form an IBR-type zinc finger. Residues 2236-2265 (CPSCQAPIEKNEGCLHMTCAKCNHGFCWRC) form an RING-type 2; atypical zinc finger. C2249 is an active-site residue. Zn(2+)-binding residues include C2254, C2257, C2262, C2265, H2273, and C2279. Residues 2365-2385 (VEQQTENLELHTNALQILLEE) are a coiled coil. S2436 carries the post-translational modification Phosphoserine. The disordered stretch occupies residues 2442 to 2517 (WEAKGPNMPG…EEEDEDEAYD (76 aa)). 2 stretches are compositionally biased toward acidic residues: residues 2461 to 2499 (EAEE…ENLD) and 2506 to 2517 (GDEEEDEDEAYD).

This sequence belongs to the cullin family. As to quaternary structure, component of the Cul9-RING complex consisting of CUL9 and RBX1; the CUL9-RBX1 complex is a heterododecamer composed of six CUL9 and six RBX1 protomers. Interacts (via C-terminal TRIAD/RBR supradomain) with E2 ubiquitin-conjugating enzyme UBE2L3. Interacts with CUL7; the interaction with the CUL7 component of the 3M complex leads to inhibition of CUL9 activity. The CUL7-CUL9 heterodimer seems to interact specifically with TP53, likely via the CPH domain. Forms a complex with p53/TP53 in the cytoplasm of unstressed cells. Interacts with UBCH7 and UBCH8. Autoubiquitinated by the CUL9-RBX1 complex at Lys-87. In terms of processing, neddylated. Neddylation is mediated by E1 enzyme UBA3-NAE1 complex and E2 enzyme UBE2F. Structural rearrangment of the C-terminal TRIAD/RBR supradomain may play a role in neddylation and deneddylation. In terms of tissue distribution, ubiquitously expressed in all tissues with highest expression in testis brain and kidney.

It is found in the cytoplasm. Its function is as follows. Core component of a Cul9-RING ubiquitin-protein ligase complex composed of CUL9 and RBX1. The CUL9-RBX1 complex mediates ubiquitination and subsequent degradation of BIRC5 and is required to maintain microtubule dynamics and genome integrity. Acts downstream of the 3M complex, which inhibits the ubiquitination of BIRC5. The CUL9-RBX1 complex also mediates mono-ubiquitination of p53/TP53. Acts as a cytoplasmic anchor protein in p53/TP53-associated protein complex. Regulates the subcellular localization of p53/TP53 and its subsequent function. Ubiquitinates apurinic/apyrimidinic endodeoxyribonuclease APEX2. Ubiquitination by the CUL9-RBX1 complex is predominantly mediated by E2 ubiquitin-conjugating enzymes UBE2L3 and UBE2D2. The protein is Cullin-9 (CUL9) of Homo sapiens (Human).